Consider the following 116-residue polypeptide: Phage-like element PBSX protein XkdD (116 aa).

This chain is Phage-like element PBSX protein XkdD (xkdD), found in Bacillus subtilis (strain 168).